The sequence spans 419 residues: Tyrosine--tRNA ligase (419 aa).

L-tyrosine is bound at residue Y34. The 'HIGH' region motif lies at 39–48 (PSGDSMHIGH). The L-tyrosine site is built by Y168 and Q172. The 'KMSKS' region signature appears at 230 to 234 (KFGKS). An ATP-binding site is contributed by K233. One can recognise an S4 RNA-binding domain in the interval 352-418 (ANLVDWLVTL…GKKKYFLVSY (67 aa)).

This sequence belongs to the class-I aminoacyl-tRNA synthetase family. TyrS type 1 subfamily. Homodimer.

Its subcellular location is the cytoplasm. It catalyses the reaction tRNA(Tyr) + L-tyrosine + ATP = L-tyrosyl-tRNA(Tyr) + AMP + diphosphate + H(+). Catalyzes the attachment of tyrosine to tRNA(Tyr) in a two-step reaction: tyrosine is first activated by ATP to form Tyr-AMP and then transferred to the acceptor end of tRNA(Tyr). The chain is Tyrosine--tRNA ligase from Listeria monocytogenes serotype 4b (strain CLIP80459).